A 330-amino-acid chain; its full sequence is Glucokinase (330 aa).

It belongs to the ROK (NagC/XylR) family.

The protein resides in the cytoplasm. The enzyme catalyses D-glucose + ATP = D-glucose 6-phosphate + ADP + H(+). The chain is Glucokinase (glcK) from Halalkalibacterium halodurans (strain ATCC BAA-125 / DSM 18197 / FERM 7344 / JCM 9153 / C-125) (Bacillus halodurans).